The chain runs to 264 residues: H-2 class II histocompatibility antigen, E-B beta chain (264 aa).

An N-terminal signal peptide occupies residues 1–26 (MVWLPRVPCVAAVILLLTVLSPPMAL). The beta-1 stretch occupies residues 27–121 (VRDSRPWFLE…ISDKFLVRRR (95 aa)). At 27 to 225 (VRDSRPWFLE…KAQSTSAQNK (199 aa)) the chain is on the extracellular side. 2 cysteine pairs are disulfide-bonded: Cys38/Cys106 and Cys144/Cys200. Asn46 carries N-linked (GlcNAc...) asparagine glycosylation. Residues 122 to 225 (VEPTVTVYPT…KAQSTSAQNK (104 aa)) are beta-2. In terms of domain architecture, Ig-like C1-type spans 124–214 (PTVTVYPTKT…PSLTDPVTVE (91 aa)). The chain crosses the membrane as a helical span at residues 226-246 (MLSGVGGFVLGLLFLGAGLFI). The Cytoplasmic portion of the chain corresponds to 247 to 264 (YFRNQKGQSGLQPTGLLS).

The protein belongs to the MHC class II family. Ubiquitinated in immature dendritic cells leading to down-regulation of MHC class II.

It is found in the membrane. The sequence is that of H-2 class II histocompatibility antigen, E-B beta chain (H2-Eb1) from Mus musculus (Mouse).